A 205-amino-acid chain; its full sequence is Probable thymidylate kinase (205 aa).

9-16 (GIDGVGKS) lines the ATP pocket.

The protein belongs to the thymidylate kinase family.

The catalysed reaction is dTMP + ATP = dTDP + ADP. This Caldivirga maquilingensis (strain ATCC 700844 / DSM 13496 / JCM 10307 / IC-167) protein is Probable thymidylate kinase.